We begin with the raw amino-acid sequence, 806 residues long: Sucrose synthase (806 aa).

A GT-B glycosyltransferase region spans residues 275-752 (MVFNVVILSP…GLQRIEEKYT (478 aa)).

This sequence belongs to the glycosyltransferase 1 family. Plant sucrose synthase subfamily.

It catalyses the reaction an NDP-alpha-D-glucose + D-fructose = a ribonucleoside 5'-diphosphate + sucrose + H(+). Its function is as follows. Sucrose-cleaving enzyme that provides UDP-glucose and fructose for various metabolic pathways. The polypeptide is Sucrose synthase (SUCS) (Vicia faba (Broad bean)).